Reading from the N-terminus, the 261-residue chain is tRNA U34 carboxymethyltransferase (261 aa).

Carboxy-S-adenosyl-L-methionine contacts are provided by residues Lys25, Trp39, Lys44, Gly63, 114 to 115 (VE), Tyr135, and Arg250.

Belongs to the class I-like SAM-binding methyltransferase superfamily. CmoB family. Homotetramer.

The enzyme catalyses carboxy-S-adenosyl-L-methionine + 5-hydroxyuridine(34) in tRNA = 5-carboxymethoxyuridine(34) in tRNA + S-adenosyl-L-homocysteine + H(+). Catalyzes carboxymethyl transfer from carboxy-S-adenosyl-L-methionine (Cx-SAM) to 5-hydroxyuridine (ho5U) to form 5-carboxymethoxyuridine (cmo5U) at position 34 in tRNAs. This chain is tRNA U34 carboxymethyltransferase, found in Helicobacter pylori (strain P12).